The primary structure comprises 147 residues: Hemoglobin subunit epsilon (147 aa).

Residues 3-147 form the Globin domain; that stretch reads HFTAEEKAII…VATALAHKYH (145 aa). Serine 14 and serine 51 each carry phosphoserine. Residues histidine 64 and histidine 93 each coordinate heme b.

It belongs to the globin family. As to quaternary structure, heterotetramer of two alpha chains and two epsilon chains in early embryonic hemoglobin Gower-2; two zeta chains and two epsilon chains in early embryonic hemoglobin Gower-1. Red blood cells.

Functionally, the epsilon chain is a beta-type chain of early mammalian embryonic hemoglobin. This is Hemoglobin subunit epsilon (HBE1) from Otolemur crassicaudatus (Brown greater galago).